Reading from the N-terminus, the 223-residue chain is Matrix protein (223 aa).

Basic residues predominate over residues 1-10 (MLTLFKKGKP). The interval 1-23 (MLTLFKKGKPKGGSVDDRNSSYR) is disordered. Positions 14–23 (SVDDRNSSYR) are enriched in basic and acidic residues.

As to quaternary structure, homomultimer. Interacts with nucleoprotein and with the cytoplasmic domain of glycoprotein.

The protein localises to the virion membrane. The protein resides in the host endomembrane system. Functionally, plays a major role in assembly and budding of virion. Completely covers the ribonucleoprotein coil and keep it in condensed bullet-shaped form. Inhibits viral transcription and stimulates replication. The polypeptide is Matrix protein (M) (Bos taurus (Bovine)).